The chain runs to 1857 residues: U3 small nucleolar RNA-associated protein 10 (1857 aa).

A helical transmembrane segment spans residues 267–287 (LTAYSIISVLSSLVPLSADLV). One copy of the HEAT repeat lies at 1817–1855 (LIPYIAELLEDDDEEVELEVRNGLVRVIENVLGEPLDRY).

Belongs to the HEATR1/UTP10 family. Component of the ribosomal small subunit (SSU) processome.

It is found in the nucleus. Its subcellular location is the nucleolus. The protein resides in the membrane. In terms of biological role, involved in nucleolar processing of pre-18S ribosomal RNA. Involved in ribosome biosynthesis. This chain is U3 small nucleolar RNA-associated protein 10, found in Debaryomyces hansenii (strain ATCC 36239 / CBS 767 / BCRC 21394 / JCM 1990 / NBRC 0083 / IGC 2968) (Yeast).